Consider the following 461-residue polypeptide: Asparagine--tRNA ligase (461 aa).

The protein belongs to the class-II aminoacyl-tRNA synthetase family. Homodimer.

The protein resides in the cytoplasm. It catalyses the reaction tRNA(Asn) + L-asparagine + ATP = L-asparaginyl-tRNA(Asn) + AMP + diphosphate + H(+). In Solibacter usitatus (strain Ellin6076), this protein is Asparagine--tRNA ligase.